Reading from the N-terminus, the 732-residue chain is Small conductance calcium-activated potassium channel protein 3 (732 aa).

The span at 1–11 (MDTSGHFHDSG) shows a compositional bias: basic and acidic residues. Disordered stretches follow at residues 1-82 (MDTS…QQAP) and 119-161 (AILH…QASP). Over residues 35–61 (QPPPPPAPPAVPQQPPGPLLQPQPPQP) the composition is skewed to pro residues. Over residues 62 to 82 (QQQQSQQQQQQQSQQQQQQAP) the composition is skewed to low complexity. Residues 119-133 (AILHPSSRQGSQLNL) are compositionally biased toward polar residues. Over residues 139 to 148 (GHSPSSTATS) the composition is skewed to low complexity. S168 carries the phosphoserine modification. Polar residues predominate over residues 241 to 257 (THNHQHAGTTAGSTTFP). Positions 241-260 (THNHQHAGTTAGSTTFPKAN) are disordered. Residues 289-309 (LIFGMFGIVVMVIETELSWGL) traverse the membrane as a helical segment. A helical transmembrane segment spans residues 316–336 (FSLALKCLISLSTVILLGLII). The helical transmembrane segment at 367 to 387 (ISLEMLVCAIHPIPGEYKFFW) threads the bilayer. The helical transmembrane segment at 406–426 (IILSIPMFLRLYLIARVMLLH) threads the bilayer. A helical transmembrane segment spans residues 455 to 475 (LMTICPGTVLLVFSISLWIIA). The segment at residues 495–515 (FLGAMWLISITFLSIGYGDMV) is an intramembrane region (pore-forming). Residues 524 to 544 (VCLLTGIMGAGCTALVVAVVA) form a helical membrane-spanning segment. The calmodulin-binding stretch occupies residues 562–638 (DTQLTKRIKN…LVDLSKMQNV (77 aa)). Residues 643-670 (ITELNDRSEDLEKQIGSLESKLEHLTAS) are a coiled coil. The tract at residues 704–732 (GTSHAPPSDSPIGISSTSFPTPYTSSSSC) is disordered. Low complexity predominate over residues 718–732 (SSTSFPTPYTSSSSC).

It belongs to the potassium channel KCNN family. KCa2.3/KCNN3 subfamily. Homodimer. Heteromultimer with KCNN2 or KCNN1; this modulates plasma membrane expression and consequently the small conductance calcium-activated potassium channel activity. The complex is composed of 4 channel subunits each of which binds to a calmodulin subunit which regulates the channel activity through calcium-binding. Interacts with CALM1. In terms of tissue distribution, expressed at low levels in atrial and ventricular myocytes (at protein level).

It is found in the cell membrane. The protein localises to the cytoplasm. The protein resides in the myofibril. It localises to the sarcomere. Its subcellular location is the z line. The enzyme catalyses K(+)(in) = K(+)(out). Its activity is regulated as follows. Inhibited by bee venom neurotoxin apamin. Functionally, small conductance calcium-activated potassium channel that mediates the voltage-independent transmembrane transfer of potassium across the cell membrane through a constitutive interaction with calmodulin which binds the intracellular calcium allowing its opening. The current is characterized by a voltage-independent activation, an intracellular calcium concentration increase-dependent activation and a single-channel conductance of 10 picosiemens. Also presents an inwardly rectifying current, thus reducing its already small outward conductance of potassium ions, which is particularly the case when the membrane potential displays positive values, above + 20 mV. Activation is followed by membrane hyperpolarization. Thought to regulate neuronal excitability by contributing to the slow component of synaptic afterhyperpolarization. This is Small conductance calcium-activated potassium channel protein 3 from Mus musculus (Mouse).